Reading from the N-terminus, the 104-residue chain is L-rhamnose mutarotase (104 aa).

A substrate-binding site is contributed by Y18. The Proton donor role is filled by H22. Substrate contacts are provided by residues Y41 and 76–77; that span reads WW.

Belongs to the rhamnose mutarotase family. Homodimer.

The protein localises to the cytoplasm. It catalyses the reaction alpha-L-rhamnose = beta-L-rhamnose. Its pathway is carbohydrate metabolism; L-rhamnose metabolism. Involved in the anomeric conversion of L-rhamnose. The polypeptide is L-rhamnose mutarotase (Bacteroides thetaiotaomicron (strain ATCC 29148 / DSM 2079 / JCM 5827 / CCUG 10774 / NCTC 10582 / VPI-5482 / E50)).